We begin with the raw amino-acid sequence, 70 residues long: Small ribosomal subunit protein bS21 (70 aa).

The tract at residues 43-70 (TERKRKAAAAVKRQHKRLRSLTLPPKLY) is disordered. The span at 45 to 61 (RKRKAAAAVKRQHKRLR) shows a compositional bias: basic residues.

The protein belongs to the bacterial ribosomal protein bS21 family.

This chain is Small ribosomal subunit protein bS21, found in Dechloromonas aromatica (strain RCB).